The sequence spans 166 residues: Small ribosomal subunit protein uS5 (166 aa).

The S5 DRBM domain maps to Y12–V75.

The protein belongs to the universal ribosomal protein uS5 family. Part of the 30S ribosomal subunit. Contacts proteins S4 and S8.

Functionally, with S4 and S12 plays an important role in translational accuracy. In terms of biological role, located at the back of the 30S subunit body where it stabilizes the conformation of the head with respect to the body. The protein is Small ribosomal subunit protein uS5 of Pseudomonas fluorescens (strain SBW25).